A 138-amino-acid chain; its full sequence is Large ribosomal subunit protein eL14B (138 aa).

An N-acetylserine modification is found at serine 2.

The protein belongs to the eukaryotic ribosomal protein eL14 family. In terms of assembly, component of the large ribosomal subunit (LSU). Mature yeast ribosomes consist of a small (40S) and a large (60S) subunit. The 40S small subunit contains 1 molecule of ribosomal RNA (18S rRNA) and 33 different proteins (encoded by 57 genes). The large 60S subunit contains 3 rRNA molecules (25S, 5.8S and 5S rRNA) and 46 different proteins (encoded by 81 genes). Post-translationally, N-terminally acetylated by acetyltransferase NatA.

The protein localises to the cytoplasm. Component of the ribosome, a large ribonucleoprotein complex responsible for the synthesis of proteins in the cell. The small ribosomal subunit (SSU) binds messenger RNAs (mRNAs) and translates the encoded message by selecting cognate aminoacyl-transfer RNA (tRNA) molecules. The large subunit (LSU) contains the ribosomal catalytic site termed the peptidyl transferase center (PTC), which catalyzes the formation of peptide bonds, thereby polymerizing the amino acids delivered by tRNAs into a polypeptide chain. The nascent polypeptides leave the ribosome through a tunnel in the LSU and interact with protein factors that function in enzymatic processing, targeting, and the membrane insertion of nascent chains at the exit of the ribosomal tunnel. The polypeptide is Large ribosomal subunit protein eL14B (Saccharomyces cerevisiae (strain ATCC 204508 / S288c) (Baker's yeast)).